Reading from the N-terminus, the 99-residue chain is Integration host factor subunit alpha (99 aa).

The disordered stretch occupies residues 49–73 (FGNFDLRDKNQRPGRNPKTGEDIPI).

Belongs to the bacterial histone-like protein family. Heterodimer of an alpha and a beta chain.

This protein is one of the two subunits of integration host factor, a specific DNA-binding protein that functions in genetic recombination as well as in transcriptional and translational control. The chain is Integration host factor subunit alpha from Shigella boydii serotype 18 (strain CDC 3083-94 / BS512).